A 236-amino-acid chain; its full sequence is LexA repressor (236 aa).

Positions 26–46 form a DNA-binding region, H-T-H motif; sequence FDEMKEALDLASKSGIHRLIT. Positions 84-107 are disordered; sequence SPSVIEGGQGRSSPAPRPAANNDD. Residues serine 157 and lysine 195 each act as for autocatalytic cleavage activity in the active site.

This sequence belongs to the peptidase S24 family. As to quaternary structure, homodimer.

The catalysed reaction is Hydrolysis of Ala-|-Gly bond in repressor LexA.. Its function is as follows. Represses a number of genes involved in the response to DNA damage (SOS response), including recA and lexA. In the presence of single-stranded DNA, RecA interacts with LexA causing an autocatalytic cleavage which disrupts the DNA-binding part of LexA, leading to derepression of the SOS regulon and eventually DNA repair. This Chelativorans sp. (strain BNC1) protein is LexA repressor.